The chain runs to 182 residues: MGLLSILRKLKSTPDQEVRILLLGLDNAGKTTLLKQLASEDISHITPTQGFNIKSVQSQGFKLNVWDIGGQRKIRPYWRNYFENTDILIYVIDSADRKRFEETGQELAELLDEEKLSGVPVLIFANKQDLLTAAPASEIAEGLNLHTIRDRVWQIQSCSALSGEGVQDGMNWVCKNVSTKKK.

Residue G2 is the site of N-myristoyl glycine attachment. Residues 24 to 31 (GLDNAGKT), 67 to 71 (DIGGQ), and 126 to 129 (NKQD) contribute to the GTP site.

It belongs to the small GTPase superfamily. Arf family.

The protein localises to the golgi apparatus membrane. The protein resides in the cytoplasm. Its subcellular location is the cytoskeleton. It is found in the spindle. It localises to the nucleus. The protein localises to the microtubule organizing center. The protein resides in the centrosome. Its subcellular location is the cell projection. It is found in the cilium. Functionally, small GTP-binding protein which cycles between an inactive GDP-bound and an active GTP-bound form, and the rate of cycling is regulated by guanine nucleotide exchange factors (GEF) and GTPase-activating proteins (GAP). Required for normal cytokinesis and cilia signaling. Required for targeting proteins to the ciliary membrane by releasing myristoylated protein from unc119 cargo adapters into the cilium. This Taeniopygia guttata (Zebra finch) protein is ADP-ribosylation factor-like protein 3 (ARL3).